Here is a 1641-residue protein sequence, read N- to C-terminus: Maestro heat-like repeat-containing protein family member 1 (1641 aa).

7 HEAT repeats span residues 3–41 (ESSM…ARPV), 159–198 (VPFL…GALE), 344–382 (CSSP…SAAA), 385–423 (EDKK…HGYL), 1048–1086 (PDQL…ERGG), 1358–1396 (LMLL…GCPD), and 1605–1641 (QVDL…VKLA).

It belongs to the MROH1 family. As to quaternary structure, homooligomer; homooligomerizes at lysosome scission sites.

The protein resides in the lysosome membrane. Its function is as follows. Lysosome fission factor. Recruited to lysosomes by RAB7 (RAB7A or RAB7B) at scission sites and homooligomerizes to mediate the constriction and scission of lysosomal tubules. May sever membranes by inserting amphipathic helices into one bilayer leaflet. Lysosome fission is required to maintain their steady-state number, shape, size, composition and function, and to accomplish regeneration. The protein is Maestro heat-like repeat-containing protein family member 1 of Homo sapiens (Human).